Here is a 409-residue protein sequence, read N- to C-terminus: Multifunctional CCA protein (409 aa).

ATP contacts are provided by Gly8 and Arg11. Residues Gly8 and Arg11 each coordinate CTP. 2 residues coordinate Mg(2+): Glu21 and Asp23. ATP contacts are provided by Arg91, Arg137, and Arg140. Residues Arg91, Arg137, and Arg140 each contribute to the CTP site. An HD domain is found at 228–329 (TGVHTLMVLT…LKALEGLDAF (102 aa)).

The protein belongs to the tRNA nucleotidyltransferase/poly(A) polymerase family. Bacterial CCA-adding enzyme type 1 subfamily. Monomer. Can also form homodimers and oligomers. Requires Mg(2+) as cofactor. The cofactor is Ni(2+).

It carries out the reaction a tRNA precursor + 2 CTP + ATP = a tRNA with a 3' CCA end + 3 diphosphate. The catalysed reaction is a tRNA with a 3' CCA end + 2 CTP + ATP = a tRNA with a 3' CCACCA end + 3 diphosphate. Its function is as follows. Catalyzes the addition and repair of the essential 3'-terminal CCA sequence in tRNAs without using a nucleic acid template. Adds these three nucleotides in the order of C, C, and A to the tRNA nucleotide-73, using CTP and ATP as substrates and producing inorganic pyrophosphate. tRNA 3'-terminal CCA addition is required both for tRNA processing and repair. Also involved in tRNA surveillance by mediating tandem CCA addition to generate a CCACCA at the 3' terminus of unstable tRNAs. While stable tRNAs receive only 3'-terminal CCA, unstable tRNAs are marked with CCACCA and rapidly degraded. The polypeptide is Multifunctional CCA protein (Thioalkalivibrio sulfidiphilus (strain HL-EbGR7)).